The primary structure comprises 571 residues: Proline--tRNA ligase (571 aa).

This sequence belongs to the class-II aminoacyl-tRNA synthetase family. ProS type 1 subfamily. In terms of assembly, homodimer.

The protein localises to the cytoplasm. It catalyses the reaction tRNA(Pro) + L-proline + ATP = L-prolyl-tRNA(Pro) + AMP + diphosphate. Its function is as follows. Catalyzes the attachment of proline to tRNA(Pro) in a two-step reaction: proline is first activated by ATP to form Pro-AMP and then transferred to the acceptor end of tRNA(Pro). As ProRS can inadvertently accommodate and process non-cognate amino acids such as alanine and cysteine, to avoid such errors it has two additional distinct editing activities against alanine. One activity is designated as 'pretransfer' editing and involves the tRNA(Pro)-independent hydrolysis of activated Ala-AMP. The other activity is designated 'posttransfer' editing and involves deacylation of mischarged Ala-tRNA(Pro). The misacylated Cys-tRNA(Pro) is not edited by ProRS. The protein is Proline--tRNA ligase of Shewanella sp. (strain W3-18-1).